We begin with the raw amino-acid sequence, 470 residues long: Aminoacyl transferase sphA (470 aa).

Residues Ser-212, His-244, and Thr-272 each contribute to the pyridoxal 5'-phosphate site. Lys-275 carries the post-translational modification N6-(pyridoxal phosphate)lysine.

The protein belongs to the class-II pyridoxal-phosphate-dependent aminotransferase family. BioF subfamily. Homodimer. The cofactor is pyridoxal 5'-phosphate.

The protein operates within secondary metabolite biosynthesis. Its function is as follows. Aminoacyl transferase; part of the gene cluster that mediates the biosynthesis of sphingofungins, bioactive molecules acting as sphingolipid inhibitors via inhibiting serine palmitoyl transferase (SPT). Within the pathway, sphA transfers 2-methyl-aminomalonate and 2-hydroxymethyl-aminomalonate onto the sphB product 3-hydroxyoctadeca-4,10-dienoyl-ACP to produce the precursors of sphingofungins E and F. The substrate specificity of sphA using 2-methyl-aminomalonate and 2-hydroxymethyl-aminomalonate instread of aminomalonate is responsible for the biosynthesis of sphingofungins E and F but not B and C like in Aspergillus fumigatus. The PKS sphB does not contain any putative thioesterase domain for releasing the nascent polyketide chain and it has been suggested that aminoacyl transferases can facilitate the polyketide chain release. The protein is Aminoacyl transferase sphA of Byssochlamys spectabilis (Paecilomyces variotii).